The sequence spans 548 residues: Folylpolyglutamate synthase (548 aa).

130–133 serves as a coordination point for ATP; it reads GKGS. The Mg(2+) site is built by Ser-157, Glu-234, and His-262. ATP-binding residues include Arg-382 and Asp-396.

The protein belongs to the folylpolyglutamate synthase family. Requires a monovalent cation as cofactor.

Its subcellular location is the mitochondrion inner membrane. The protein localises to the mitochondrion matrix. It localises to the cytoplasm. It catalyses the reaction (6S)-5,6,7,8-tetrahydrofolyl-(gamma-L-Glu)(n) + L-glutamate + ATP = (6S)-5,6,7,8-tetrahydrofolyl-(gamma-L-Glu)(n+1) + ADP + phosphate + H(+). Its pathway is cofactor biosynthesis; tetrahydrofolylpolyglutamate biosynthesis. In terms of biological role, catalyzes conversion of folates to polyglutamate derivatives allowing concentration of folate compounds in the cell and the intracellular retention of these cofactors, which are important substrates for most of the folate-dependent enzymes that are involved in one-carbon transfer reactions involved in purine, pyrimidine and amino acid synthesis. Required for methionine synthesis and maintenance of intact mitochondrial DNA. Involved in telomere maintenance. The chain is Folylpolyglutamate synthase from Saccharomyces cerevisiae (strain RM11-1a) (Baker's yeast).